The chain runs to 431 residues: Histidinol dehydrogenase (431 aa).

NAD(+)-binding residues include Y127, Q189, and N212. The substrate site is built by S237, Q259, and H262. Positions 259 and 262 each coordinate Zn(2+). Active-site proton acceptor residues include E326 and H327. Substrate is bound by residues H327, D360, E414, and H419. D360 lines the Zn(2+) pocket. H419 lines the Zn(2+) pocket.

The protein belongs to the histidinol dehydrogenase family. Requires Zn(2+) as cofactor.

It catalyses the reaction L-histidinol + 2 NAD(+) + H2O = L-histidine + 2 NADH + 3 H(+). The protein operates within amino-acid biosynthesis; L-histidine biosynthesis; L-histidine from 5-phospho-alpha-D-ribose 1-diphosphate: step 9/9. Catalyzes the sequential NAD-dependent oxidations of L-histidinol to L-histidinaldehyde and then to L-histidine. The chain is Histidinol dehydrogenase from Xanthomonas oryzae pv. oryzae (strain KACC10331 / KXO85).